The primary structure comprises 300 residues: MLPLLAALLAAACPLPPVRGGAADAPGLLGVPSNASVNASSADEPIAPRLLASAAPGPPERPGPEEAAAAAAPCNISVQRQMLSSLLVRWGRPRGFQCDLLLFSTNAHGRAFFAAAFHRVGPPLLIEHLGLAAGGAQQDLRLCVGCGWVRGRRTGRLRPAAAPSAAAATAGAPTALPAYPAAEPPGPLWLQGEPLHFCCLDFSLEELQGEPGWRLNRKPIESTLVACFMTLVIVVWSVAALIWPVPIIAGFLPNGMEQRRTTASTTAATPAAVPAGTTAAAAAAAAAAAAAAVTSGVATK.

The first 20 residues, 1 to 20 (MLPLLAALLAAACPLPPVRG), serve as a signal peptide directing secretion. The N-linked (GlcNAc...) asparagine glycan is linked to Asn75. A run of 2 helical transmembrane segments spans residues 231–251 (LVIVVWSVAALIWPVPIIAGF) and 273–293 (VPAGTTAAAAAAAAAAAAAAV).

The protein belongs to the TMEM158 family. Post-translationally, N-glycosylated.

Its subcellular location is the membrane. In terms of biological role, receptor for brain injury-derived neurotrophic peptide (BINP), a synthetic 13-mer peptide. The polypeptide is Transmembrane protein 158 (TMEM158) (Homo sapiens (Human)).